Reading from the N-terminus, the 187-residue chain is Elongation factor P (187 aa).

The protein belongs to the elongation factor P family.

The protein resides in the cytoplasm. Its pathway is protein biosynthesis; polypeptide chain elongation. Involved in peptide bond synthesis. Stimulates efficient translation and peptide-bond synthesis on native or reconstituted 70S ribosomes in vitro. Probably functions indirectly by altering the affinity of the ribosome for aminoacyl-tRNA, thus increasing their reactivity as acceptors for peptidyl transferase. This chain is Elongation factor P, found in Chelativorans sp. (strain BNC1).